The primary structure comprises 209 residues: Ferritin heavy chain (209 aa).

Residues 1–27 (MMKSVFFGVVAITVAILSIYQETAQAQ) form the signal peptide. In terms of domain architecture, Ferritin-like diiron spans 40-193 (DSVDDQCLAA…EKIATLKKMK (154 aa)). Positions 57, 92, 95, 140, and 175 each coordinate Fe cation.

Belongs to the ferritin family. Oligomer of 24 subunits. There are two types of subunits: L (light) chain and H (heavy) chain. The functional molecule forms a roughly spherical shell with a diameter of 12 nm and contains a central cavity into which the insoluble mineral iron core is deposited.

The protein localises to the secreted. Its subcellular location is the cytoplasm. The enzyme catalyses 4 Fe(2+) + O2 + 4 H(+) = 4 Fe(3+) + 2 H2O. Its function is as follows. Stores iron in a soluble, non-toxic, readily available form. Important for iron homeostasis. Has ferroxidase activity. Iron is taken up in the ferrous form and deposited as ferric hydroxides after oxidation. The chain is Ferritin heavy chain (FERH) from Aedes aegypti (Yellowfever mosquito).